A 145-amino-acid chain; its full sequence is Phosphoribosyl-AMP cyclohydrolase (145 aa).

D87 provides a ligand contact to Mg(2+). C88 contacts Zn(2+). Residues D89 and D91 each coordinate Mg(2+). The Zn(2+) site is built by C104 and C111.

The protein belongs to the PRA-CH family. As to quaternary structure, homodimer. It depends on Mg(2+) as a cofactor. Zn(2+) serves as cofactor.

The protein localises to the cytoplasm. It carries out the reaction 1-(5-phospho-beta-D-ribosyl)-5'-AMP + H2O = 1-(5-phospho-beta-D-ribosyl)-5-[(5-phospho-beta-D-ribosylamino)methylideneamino]imidazole-4-carboxamide. It participates in amino-acid biosynthesis; L-histidine biosynthesis; L-histidine from 5-phospho-alpha-D-ribose 1-diphosphate: step 3/9. Its function is as follows. Catalyzes the hydrolysis of the adenine ring of phosphoribosyl-AMP. The sequence is that of Phosphoribosyl-AMP cyclohydrolase from Nitrobacter winogradskyi (strain ATCC 25391 / DSM 10237 / CIP 104748 / NCIMB 11846 / Nb-255).